Here is a 330-residue protein sequence, read N- to C-terminus: MINLRRFVHTSCRLERGRTAFYNVHQKVTDPAKQDPDYFEKKARELPLDQNYIDALTKLYYEKIGSERDLGLKAADNLILEKTEFGLPRIEKSKTRAKYEDLDVLSNAPESVKKIFSVEMATRKELSQEWKQSLIKSVRQHSLDENSLEMKIAWLTALIRHWSLLVNDIGQETKKKPTWLTHRIWLVINERRKALRILRERNETAFEKTIAALKISYHVPKQPAHVKTRKAWAEAQLKLRVENEKEKRLEELHEKYDKEVEEHKRETQEKRKALNNELDKLAQEMRQIDVIEGKSFETVGKYEPALISSLTETVIHSNLFYHPPPTMTEK.

It belongs to the universal ribosomal protein uS15 family. As to quaternary structure, component of the mitochondrial ribosome small subunit (28S) which comprises a 12S rRNA and about 30 distinct proteins.

It is found in the mitochondrion. The polypeptide is Small ribosomal subunit protein uS15m (mrps-15) (Caenorhabditis elegans).